Reading from the N-terminus, the 809-residue chain is Lethal factor (809 aa).

A signal peptide spans 1–33 (MNIKKEFIKVISMSCLVTAITLSGPVFIPLVQG). The segment at 39–66 (DVGMHVKEKEKNKDENKRKDEERNKTQE) is disordered. Residues 40-66 (VGMHVKEKEKNKDENKRKDEERNKTQE) show a composition bias toward basic and acidic residues. The tract at residues 60-295 (ERNKTQEEHL…NLSLEELKDQ (236 aa)) is i; PA-binding region. An ATLF-like 1 domain is found at 70–282 (KEIMKHIVKI…AFNYMDKFNE (213 aa)). The IIA stretch occupies residues 296–330 (RMLARYEKWEKIKQHYQHWSDSLSEEGRGLLKKLQ). 5 repeat units span residues 315-333 (SDSLSEEGRGLLKKLQIPI), 342-357 (HSLSQEEKELLKRIQI), 360-378 (SDFLSTEEKEFLKKLQIDI), 380-397 (DSLSEEEKELLNRIQVDS), and 399-416 (NPLSEKEKEFLKKLKLDI). The 5 X approximate repeats stretch occupies residues 315 to 416 (SDSLSEEGRG…EFLKKLKLDI (102 aa)). The segment at 336-416 (KKDDIIHSLS…EFLKKLKLDI (81 aa)) is III. The tract at residues 420–583 (DINQRLQDTG…EYIRIDAKVV (164 aa)) is IIB. Positions 585-809 (KSKIDTKIQE…NDQIKFIINS (225 aa)) are IV. The 196-residue stretch at 609 to 804 (LPKYTKLITF…TFQFINDQIK (196 aa)) folds into the ATLF-like 2 domain. Zn(2+) is bound at residue His719. Glu720 serves as the catalytic Proton acceptor. The Zn(2+) site is built by His723, Tyr761, and Glu768.

The protein belongs to the peptidase M34 family. As to quaternary structure, interacts (via ATLF domain 1) with the cleaved form of protective antigen (PA-63) anthrax toxin; interaction is required for LF translocation into the host cytoplasm. Interacts with PA-63 homooligomers (either homoheptamers or homooctamers): three molecules of LF bind the PA-63 homoheptamer to form the PA(7)LF(3) complex, in which the relative position of the N-terminal alpha-helices in the three LFs determines which factor is translocated first. Zn(2+) is required as a cofactor.

It is found in the secreted. Its subcellular location is the host cytoplasm. The protein localises to the host cytosol. It catalyses the reaction Preferred amino acids around the cleavage site can be denoted BBBBxHx-|-H, in which B denotes Arg or Lys, H denotes a hydrophobic amino acid, and x is any amino acid. The only known protein substrates are mitogen-activated protein (MAP) kinase kinases.. With respect to regulation, inhibited by NSC-12155 (1,3-Bis(2-methyl-4-aminoquinoline-6-yl)ure). Inhibited by phenoxyacetic acid bearing alpha-benzyl substituents on the C2-side chain. Inhibited by sulfonamide hydroxamate with benzylic additions at the sulfonamide nitrogen. Also inhibited by sulfonamide hydroxamates with alkylation at the sulfonamide nitrogen. Inhibited by hydroxamic acid inhibitors. In terms of biological role, lethal factor (LF), which constitutes one of the three proteins composing the anthrax toxin, is able to trigger rapid cell death in macrophages. Acts as a protease that cleaves the N-terminal of most dual specificity mitogen-activated protein kinase kinases (MAPKKs or MAP2Ks) (except for MAP2K5): cleavage invariably occurs within the N-terminal proline-rich region preceding the kinase domain, thus disrupting a sequence involved in directing specific protein-protein interactions necessary for the assembly of signaling complexes. Also cleaves mouse Nlrp1b: host Nlrp1b cleavage promotes ubiquitination and degradation of the N-terminal part of Nlrp1b by the proteasome, thereby releasing the cleaved C-terminal part of Nlrp1b, which polymerizes and forms the Nlrp1b inflammasome followed by host cell pyroptosis. Able to cleave mouse Nlrp1b alleles 1 and 5, while it is not able to cleave Nlrp1b alleles 2, 3 and 4. In contrast, does not cleave NLRP1 human ortholog. LF is not toxic by itself and only acts as a lethal factor when associated with protective antigen (PA) to form the lethal toxin (LeTx): PA is required for LF translocation into the host cytosol. The chain is Lethal factor from Bacillus anthracis.